Reading from the N-terminus, the 278-residue chain is Protein irg-2 (278 aa).

A disordered region spans residues 152–179; sequence NSIRGQPFKSLQPENRTPTQVTGHQQES. The segment covering 163–179 has biased composition (polar residues); it reads QPENRTPTQVTGHQQES.

Plays a role in innate immunity by conferring resistance to virulent strains of the Gram-negative bacterium P.aeruginosa via the zip-2 pathway and independent of the pmk-1 p38MAPK pathway. Induced as part of several immune responses to translational inhibition arising from endocytosis of ToxA during P.aeruginosa infection or exposure to exogenous cycloheximide. In Caenorhabditis elegans, this protein is Protein irg-2.